The following is a 522-amino-acid chain: Monogalactosyldiacylglycerol synthase, chloroplastic (522 aa).

The N-terminal 98 residues, 1-98 (MSHPSTVTSE…RIPLGFSSIG (98 aa)), are a transit peptide targeting the chloroplast.

This sequence belongs to the glycosyltransferase 28 family. Homodimer. Zn(2+) serves as cofactor.

Its subcellular location is the plastid. It localises to the chloroplast inner membrane. It carries out the reaction a 1,2-diacyl-sn-glycerol + UDP-alpha-D-galactose = a 1,2-diacyl-3-O-(beta-D-galactosyl)-sn-glycerol + UDP + H(+). Inhibited by ortho-phenanthroline and UDP (competitive inhibitor relatively to UDP-Gal only) and inactivated by citraconic anhydride, tert-butoxycarbonyl-L-methionine hydrosuccinimidyl ester (SLR) and N-ethylmaleimide (NEM). Functionally, involved in the synthesis of the major structural component of photosynthetic membranes. The 1,2-diacylglycerol substrate preference is 18:2/18:2 &gt; 18:0/18:1 &gt; 18:1/18:1 &gt; 18:1/16:0 &gt; 16:0/18:2 &gt; 18:3/18:3 &gt; 16:0/18:1 &gt; 16:0/16:0 &gt; 18:0/18:0. This chain is Monogalactosyldiacylglycerol synthase, chloroplastic (MGD A), found in Spinacia oleracea (Spinach).